The primary structure comprises 318 residues: NADH-ubiquinone oxidoreductase chain 1 (318 aa).

The next 8 membrane-spanning stretches (helical) occupy residues 2–22, 70–90, 100–120, 147–167, 172–192, 222–242, 253–273, and 294–314; these read FMIN…FLTL, MFIL…IPLP, LGVL…LWSG, AIIL…TLII, MWLI…TLAE, LFFM…AILF, ELYT…FLWI, and LPLT…TSGI.

It belongs to the complex I subunit 1 family. As to quaternary structure, core subunit of respiratory chain NADH dehydrogenase (Complex I) which is composed of 45 different subunits.

It is found in the mitochondrion inner membrane. It carries out the reaction a ubiquinone + NADH + 5 H(+)(in) = a ubiquinol + NAD(+) + 4 H(+)(out). Core subunit of the mitochondrial membrane respiratory chain NADH dehydrogenase (Complex I) which catalyzes electron transfer from NADH through the respiratory chain, using ubiquinone as an electron acceptor. Essential for the catalytic activity and assembly of complex I. The chain is NADH-ubiquinone oxidoreductase chain 1 (MT-ND1) from Bos indicus (Zebu).